A 203-amino-acid chain; its full sequence is Thymidylate kinase (203 aa).

10–17 (GIDGAGKS) contributes to the ATP binding site.

This sequence belongs to the thymidylate kinase family.

The enzyme catalyses dTMP + ATP = dTDP + ADP. In terms of biological role, phosphorylation of dTMP to form dTDP in both de novo and salvage pathways of dTTP synthesis. In Cupriavidus necator (strain ATCC 17699 / DSM 428 / KCTC 22496 / NCIMB 10442 / H16 / Stanier 337) (Ralstonia eutropha), this protein is Thymidylate kinase.